Here is a 390-residue protein sequence, read N- to C-terminus: S-adenosylmethionine synthase 2 (390 aa).

E9 serves as a coordination point for Mg(2+). H15 serves as a coordination point for ATP. E43 contributes to the K(+) binding site. Residues E56 and Q99 each coordinate L-methionine. ATP is bound by residues 167–169 (DGK), 235–238 (SGRF), D246, 252–253 (RK), A269, K273, and K277. D246 serves as a coordination point for L-methionine. Residue K277 coordinates L-methionine.

The protein belongs to the AdoMet synthase family. Homotetramer. Mn(2+) serves as cofactor. It depends on Mg(2+) as a cofactor. Requires Co(2+) as cofactor. K(+) is required as a cofactor.

Its subcellular location is the cytoplasm. The catalysed reaction is L-methionine + ATP + H2O = S-adenosyl-L-methionine + phosphate + diphosphate. The protein operates within amino-acid biosynthesis; S-adenosyl-L-methionine biosynthesis; S-adenosyl-L-methionine from L-methionine: step 1/1. Catalyzes the formation of S-adenosylmethionine from methionine and ATP. The reaction comprises two steps that are both catalyzed by the same enzyme: formation of S-adenosylmethionine (AdoMet) and triphosphate, and subsequent hydrolysis of the triphosphate. In Nicotiana tabacum (Common tobacco), this protein is S-adenosylmethionine synthase 2 (SAMS2).